The sequence spans 177 residues: ATP synthase subunit delta (177 aa).

This sequence belongs to the ATPase delta chain family. In terms of assembly, F-type ATPases have 2 components, F(1) - the catalytic core - and F(0) - the membrane proton channel. F(1) has five subunits: alpha(3), beta(3), gamma(1), delta(1), epsilon(1). CF(0) has four main subunits: a(1), b(1), b'(1) and c(10-14). The alpha and beta chains form an alternating ring which encloses part of the gamma chain. F(1) is attached to F(0) by a central stalk formed by the gamma and epsilon chains, while a peripheral stalk is formed by the delta, b and b' chains.

The protein resides in the cell inner membrane. Its function is as follows. F(1)F(0) ATP synthase produces ATP from ADP in the presence of a proton or sodium gradient. F-type ATPases consist of two structural domains, F(1) containing the extramembraneous catalytic core and F(0) containing the membrane proton channel, linked together by a central stalk and a peripheral stalk. During catalysis, ATP synthesis in the catalytic domain of F(1) is coupled via a rotary mechanism of the central stalk subunits to proton translocation. This protein is part of the stalk that links CF(0) to CF(1). It either transmits conformational changes from CF(0) to CF(1) or is implicated in proton conduction. The sequence is that of ATP synthase subunit delta from Methylibium petroleiphilum (strain ATCC BAA-1232 / LMG 22953 / PM1).